The primary structure comprises 1809 residues: Pyochelin synthetase PchF (1809 aa).

The interval 69-490 (FPLTPVQAAY…GLLRRLAQSP (422 aa)) is condensation/cyclization. Residues 520–915 (FAERALLTPD…GREDDQVKIR (396 aa)) form an adenylation region. Residues 1407–1488 (APADELENAL…GLAERLRSAP (82 aa)) form the Carrier domain. At S1442 the chain carries O-(pantetheine 4'-phosphoryl)serine. Positions 1584 to 1797 (LGRRYAEALH…FDCLGEALAQ (214 aa)) are thioesterase.

This sequence belongs to the NRP synthetase family. Pantetheine 4'-phosphate is required as a cofactor.

The catalysed reaction is holo-[peptidyl-carrier protein] + L-cysteine + ATP = L-cysteinyl-[peptidyl-carrier protein] + AMP + diphosphate. Its pathway is siderophore biosynthesis. Functionally, involved in the biosynthesis of the siderophore pyochelin. Adenylates L-cysteine and loads it onto its peptidyl carrier domain via a thioester linkage to the phosphopanthetheine moiety. Then forms a peptide bond between the salicyl-thiazolinyl intermediate bound to the second carrier domain of PchE and the cysteine bound to its own peptidyl carrier domain to form the salicyl-thiazolinyl-cysteinyl-S-PCP2 intermediate. It subsequently cyclizes the C-terminal cysteine to form the second thiazoline heterocycle in the salicyl-thiazolinyl-thiazolinyl-S-PCP2 intermediate. When this intermediate is released by the action of a thioesterase, it produces the tricyclic acid hydroxyphenyl-thiazolyl-thiazolinyl-carboxylic acid (HPTT-COOH), an advanced intermediate containing the aryl-4,2-bis-heterocyclic skeleton of the bithiazoline class of siderophores. The polypeptide is Pyochelin synthetase PchF (Pseudomonas aeruginosa (strain ATCC 15692 / DSM 22644 / CIP 104116 / JCM 14847 / LMG 12228 / 1C / PRS 101 / PAO1)).